A 46-amino-acid polypeptide reads, in one-letter code: Delta-actitoxin-Avd1d (46 aa).

3 disulfides stabilise this stretch: C4/C44, C6/C34, and C27/C45.

The protein belongs to the sea anemone sodium channel inhibitory toxin family. Type I subfamily.

Its subcellular location is the secreted. The protein resides in the nematocyst. Functionally, binds specifically to voltage-gated sodium channels (Nav), thereby delaying their inactivation during signal transduction. Thus it strongly stimulates mammalian cardiac muscle contraction. The sequence is that of Delta-actitoxin-Avd1d from Anemonia sulcata (Mediterranean snakelocks sea anemone).